We begin with the raw amino-acid sequence, 137 residues long: Oleosin Ara h 11.0102 (137 aa).

At A2 the chain carries N-acetylalanine; alternate. Transmembrane regions (helical) follow at residues A27 to I47 and L55 to L75.

The protein belongs to the oleosin family. As to expression, expressed in seeds (at protein level).

The protein resides in the lipid droplet. Its subcellular location is the membrane. May have a structural role to stabilize the lipid body during desiccation of the seed by preventing coalescence of the oil. Probably interacts with both lipid and phospholipid moieties of lipid bodies. May also provide recognition signals for specific lipase anchorage in lipolysis during seedling growth. In Arachis hypogaea (Peanut), this protein is Oleosin Ara h 11.0102.